The chain runs to 1887 residues: ATP-dependent DNA helicase tlh1 (1887 aa).

Positions 329-347 (NQQRREQQDKGENKKRQDD) are enriched in basic and acidic residues. Disordered regions lie at residues 329-372 (NQQR…EEEE), 504-552 (ERKE…NTDD), and 1110-1135 (MVEGDKEKDKTNEEKNKDEVKAEMTQ). Acidic residues-rich tracts occupy residues 360 to 372 (LEDDEKDNDEEEE) and 524 to 533 (SAEDDNDNDN). The segment covering 540 to 549 (NNNNNNNNTN) has biased composition (low complexity). The segment covering 1112–1131 (EGDKEKDKTNEEKNKDEVKA) has biased composition (basic and acidic residues). The Helicase ATP-binding domain maps to 1200–1375 (YFSLLNRMNL…RQTFCTNFYV (176 aa)). Residues 1213 to 1220 (LPTGGGKS) and 1240 to 1247 (MNMVTLVL) each bind ATP. Residues 1322–1325 (DEAH) carry the DEAH box motif. Positions 1401 to 1559 (DLRTLMKRTK…CVRSFLASEM (159 aa)) constitute a Helicase C-terminal domain. The segment at 1613–1643 (YNASFSSSPPPQPGNSSGMSAMNTNTTSTTP) is disordered. Residues 1626–1642 (GNSSGMSAMNTNTTSTT) show a composition bias toward low complexity. The segment at 1804–1821 (STCYKCGKADHNLRECKL) adopts a CCHC-type zinc-finger fold.

This sequence belongs to the helicase family. RecQ subfamily.

It catalyses the reaction Couples ATP hydrolysis with the unwinding of duplex DNA by translocating in the 3'-5' direction.. The enzyme catalyses ATP + H2O = ADP + phosphate + H(+). In terms of biological role, a probable ATP-dependent 3'-5' DNA helicase. Has a role in telomerase-independent telomere maintenance. The protein is ATP-dependent DNA helicase tlh1 of Schizosaccharomyces pombe (strain 972 / ATCC 24843) (Fission yeast).